A 281-amino-acid polypeptide reads, in one-letter code: Biotin synthase (281 aa).

Residues Met1 to Arg230 form the Radical SAM core domain. [4Fe-4S] cluster contacts are provided by Cys18, Cys22, and Cys25. Positions 62, 97, and 223 each coordinate [2Fe-2S] cluster.

Belongs to the radical SAM superfamily. Biotin synthase family. In terms of assembly, homodimer. It depends on [4Fe-4S] cluster as a cofactor. The cofactor is [2Fe-2S] cluster.

The enzyme catalyses (4R,5S)-dethiobiotin + (sulfur carrier)-SH + 2 reduced [2Fe-2S]-[ferredoxin] + 2 S-adenosyl-L-methionine = (sulfur carrier)-H + biotin + 2 5'-deoxyadenosine + 2 L-methionine + 2 oxidized [2Fe-2S]-[ferredoxin]. It functions in the pathway cofactor biosynthesis; biotin biosynthesis; biotin from 7,8-diaminononanoate: step 2/2. Functionally, catalyzes the conversion of dethiobiotin (DTB) to biotin by the insertion of a sulfur atom into dethiobiotin via a radical-based mechanism. This chain is Biotin synthase, found in Sulfurimonas denitrificans (strain ATCC 33889 / DSM 1251) (Thiomicrospira denitrificans (strain ATCC 33889 / DSM 1251)).